Here is a 447-residue protein sequence, read N- to C-terminus: Phosphoglucosamine mutase (447 aa).

The active-site Phosphoserine intermediate is the S102. S102, D241, D243, and D245 together coordinate Mg(2+). S102 bears the Phosphoserine mark.

Belongs to the phosphohexose mutase family. Mg(2+) is required as a cofactor. Post-translationally, activated by phosphorylation.

It catalyses the reaction alpha-D-glucosamine 1-phosphate = D-glucosamine 6-phosphate. Its function is as follows. Catalyzes the conversion of glucosamine-6-phosphate to glucosamine-1-phosphate. This chain is Phosphoglucosamine mutase, found in Ruegeria sp. (strain TM1040) (Silicibacter sp.).